A 397-amino-acid polypeptide reads, in one-letter code: 3-ketoacyl-CoA thiolase, mitochondrial (397 aa).

A mitochondrion; not cleaved-targeting transit peptide spans 1-16 (MALLRGVFVVAAKRTP). Lys25 carries the post-translational modification N6-acetyllysine; alternate. At Lys25 the chain carries N6-succinyllysine; alternate. Position 45 is an N6-succinyllysine (Lys45). Cys92 serves as the catalytic Acyl-thioester intermediate. Position 119 is a phosphothreonine (Thr119). At Ser121 the chain carries Phosphoserine. Tyr127 is modified (phosphotyrosine). Thr136 is subject to Phosphothreonine. N6-acetyllysine; alternate is present on Lys137. Residue Lys137 is modified to N6-succinyllysine; alternate. Position 140 is a phosphoserine (Ser140). N6-acetyllysine; alternate is present on residues Lys143, Lys171, Lys191, and Lys209. 4 positions are modified to N6-succinyllysine; alternate: Lys143, Lys171, Lys191, and Lys209. N6-succinyllysine is present on residues Lys211, Lys212, and Lys214. CoA-binding residues include Arg224 and Thr227. Residue Lys234 is modified to N6-acetyllysine; alternate. Residue Lys234 is modified to N6-succinyllysine; alternate. Lys240 is subject to N6-succinyllysine. The residue at position 241 (Lys241) is an N6-acetyllysine. Ser251 provides a ligand contact to CoA. Lys269 and Lys270 each carry N6-acetyllysine. Lys305 carries the post-translational modification N6-acetyllysine; alternate. The residue at position 305 (Lys305) is an N6-succinyllysine; alternate. Ser310 bears the Phosphoserine mark. N6-acetyllysine; alternate is present on Lys312. Lys312 is modified (N6-succinyllysine; alternate). A Phosphoserine modification is found at Ser333. N6-acetyllysine occurs at positions 340 and 375. Cys382 (proton donor/acceptor) is an active-site residue.

It belongs to the thiolase-like superfamily. Thiolase family. As to quaternary structure, homotetramer. Interacts with BNIP3.

Its subcellular location is the mitochondrion. The catalysed reaction is an acyl-CoA + acetyl-CoA = a 3-oxoacyl-CoA + CoA. It catalyses the reaction 2 acetyl-CoA = acetoacetyl-CoA + CoA. It carries out the reaction acetyl-CoA + H2O = acetate + CoA + H(+). The enzyme catalyses propanoyl-CoA + H2O = propanoate + CoA + H(+). The catalysed reaction is butanoyl-CoA + H2O = butanoate + CoA + H(+). It catalyses the reaction hexanoyl-CoA + H2O = hexanoate + CoA + H(+). It carries out the reaction octanoyl-CoA + H2O = octanoate + CoA + H(+). The enzyme catalyses decanoyl-CoA + H2O = decanoate + CoA + H(+). The catalysed reaction is dodecanoyl-CoA + H2O = dodecanoate + CoA + H(+). It catalyses the reaction tetradecanoyl-CoA + H2O = tetradecanoate + CoA + H(+). It carries out the reaction hexadecanoyl-CoA + H2O = hexadecanoate + CoA + H(+). The protein operates within lipid metabolism; fatty acid beta-oxidation. Its function is as follows. In the production of energy from fats, this is one of the enzymes that catalyzes the last step of the mitochondrial beta-oxidation pathway, an aerobic process breaking down fatty acids into acetyl-CoA. Using free coenzyme A/CoA, catalyzes the thiolytic cleavage of medium- to long-chain unbranched 3-oxoacyl-CoAs into acetyl-CoA and a fatty acyl-CoA shortened by two carbon atoms. Also catalyzes the condensation of two acetyl-CoA molecules into acetoacetyl-CoA and could be involved in the production of ketone bodies. Also displays hydrolase activity on various fatty acyl-CoAs. Thereby, could be responsible for the production of acetate in a side reaction to beta-oxidation. Abolishes BNIP3-mediated apoptosis and mitochondrial damage. The sequence is that of 3-ketoacyl-CoA thiolase, mitochondrial (ACAA2) from Pongo abelii (Sumatran orangutan).